Reading from the N-terminus, the 864-residue chain is Calphotin (864 aa).

The leucine-zipper stretch occupies residues 816–858 (LQTTDVSLLAIAATLDAIGEKLKDQKARNQQVMDRLCEIEKIL).

In terms of assembly, homodimer. As to expression, soma and axons of photoreceptor cells of compound eyes and ocelli.

It localises to the cytoplasm. In terms of biological role, plays important roles in both rhabdomere development and in photoreceptor cell survival. Might function as a calcium-sequestering 'sponge' to regulate the amount of free cytoplasmic calcium. It binds 0.3 mole of Ca(2+) per mole of protein. The polypeptide is Calphotin (Cpn) (Drosophila melanogaster (Fruit fly)).